The primary structure comprises 303 residues: GTPase Era (303 aa).

The region spanning 7–174 (KSGFVAILGR…IDTLSEKLDE (168 aa)) is the Era-type G domain. The G1 stretch occupies residues 15–22 (GRPNVGKS). 15 to 22 (GRPNVGKS) contacts GTP. Residues 41–45 (QTTRN) are G2. Residues 62 to 65 (DTPG) form a G3 region. GTP-binding positions include 62–66 (DTPGI) and 124–127 (NKID). Residues 124 to 127 (NKID) are G4. Residues 153–155 (ISA) form a G5 region. The KH type-2 domain maps to 205–283 (TREEVPHSIA…YLETWVKIKN (79 aa)).

The protein belongs to the TRAFAC class TrmE-Era-EngA-EngB-Septin-like GTPase superfamily. Era GTPase family. Monomer.

The protein resides in the cytoplasm. It is found in the cell membrane. Its function is as follows. An essential GTPase that binds both GDP and GTP, with rapid nucleotide exchange. Plays a role in 16S rRNA processing and 30S ribosomal subunit biogenesis and possibly also in cell cycle regulation and energy metabolism. This Lactococcus lactis subsp. lactis (strain IL1403) (Streptococcus lactis) protein is GTPase Era.